The following is a 201-amino-acid chain: Keratin-associated protein 4-12 (201 aa).

A run of 30 repeats spans residues 5–9 (CCGSV), 20–24 (CCRPS), 25–29 (CCQTT), 30–34 (CCRTT), 35–39 (CCRPS), 40–44 (CCVSS), 45–49 (CCRPQ), 50–54 (CCQSV), 55–59 (CCQPT), 60–64 (CCRPS), 65–69 (CCQTT), 70–74 (CCRTT), 75–79 (CCRPS), 80–84 (CCVSS), 85–89 (CCRPQ), 90–94 (CCQSV), 95–99 (CCQPT), 100–104 (CCRPS), 105–109 (CCQTT), 110–114 (CCRTT), 115–119 (CCRPS), 120–124 (CCVSS), 125–129 (CCRPQ), 130–134 (CCQSV), 135–139 (CCQPT), 140–144 (CCRPS), 145–149 (CCISS), 155–159 (CCESS), 160–164 (CCRPC), and 165–169 (CCLRP). Residues 5–169 (CCGSVCSDQG…CCRPCCCLRP (165 aa)) are 31 X 5 AA repeats of C-C-[GRQVIL]-[SPTR]-[VSTQPC].

This sequence belongs to the KRTAP type 4 family. Interacts with hair keratins. In terms of tissue distribution, expressed in the hair follicles.

Functionally, in the hair cortex, hair keratin intermediate filaments are embedded in an interfilamentous matrix, consisting of hair keratin-associated proteins (KRTAP), which are essential for the formation of a rigid and resistant hair shaft through their extensive disulfide bond cross-linking with abundant cysteine residues of hair keratins. The matrix proteins include the high-sulfur and high-glycine-tyrosine keratins. In Homo sapiens (Human), this protein is Keratin-associated protein 4-12 (KRTAP4-12).